A 366-amino-acid polypeptide reads, in one-letter code: Homer protein homolog 1 (366 aa).

The residue at position 2 (G2) is an N-acetylglycine. One can recognise a WH1 domain in the interval 2–110; it reads GEQPIFSTRA…EKFQEFKEAA (109 aa). A disordered region spans residues 114 to 189; the sequence is KEKSQEKMEL…RTQALSHASS (76 aa). Polar residues-rich tracts occupy residues 138 to 147 and 155 to 170; these read SPLTPESING and DVTQNSEPRAEPTQNA. The stretch at 193–364 forms a coiled coil; the sequence is KHWEAELATL…LRDNLAKLLE (172 aa). Positions 302–366 are required for tetramerization; that stretch reads KLQEVEIRNK…DNLAKLLECS (65 aa). S318 bears the Phosphoserine mark.

This sequence belongs to the Homer family. As to quaternary structure, tetramer; this tetrameric structure is critical for forming the high-order complex with SHANK1, which in turn is necessary for the structural and functional integrity of dendritic spines. Isoform 1, isoform 2 and isoform 3 encode a coiled-coil structure that mediates homo- and heteromultimerization. Interacts with GRM1, GRM5, ITPR1, DNM3, RYR1, RYR2 and SHANK3. Interacts with IFT57 and OPHN1. Interacts with SHANK1; forms high-order polymerized complex with a mesh-like network structure, at least composed of SHANK1, HOMER1 and DLGAP1; the complex formation is SHANK1 multimerization dependent. Interacts with NFATC4. Interacts with DAGLA (via PPXXF motif); this interaction is required for the cell membrane localization of DAGLA. Interacts with SRGAP2. In terms of tissue distribution, expressed in skeletal muscle at the level of the Z line, in the forebrain and cerebellum. Expressed in cardiac and skeletal muscle. As to expression, expressed in the hippocampus. In terms of tissue distribution, expressed in skeletal muscle at the level of the Z line, in the heart, forebrain and cerebellum.

It is found in the cytoplasm. It localises to the postsynaptic density. The protein resides in the synapse. The protein localises to the cell projection. Its subcellular location is the dendritic spine. Postsynaptic density scaffolding protein. Binds and cross-links cytoplasmic regions of GRM1, GRM5, ITPR1, DNM3, RYR1, RYR2, SHANK1 and SHANK3. By physically linking GRM1 and GRM5 with ER-associated ITPR1 receptors, it aids the coupling of surface receptors to intracellular calcium release. May also couple GRM1 to PI3 kinase through its interaction with AGAP2. Isoform 1 regulates the trafficking and surface expression of GRM5. Differentially regulates the functions of the calcium activated channel ryanodine receptors RYR1 and RYR2. Isoform 1 decreases the activity of RYR2, and increases the activity of RYR1, whereas isoform 5 counteracts the effects by competing for binding sites. Isoform 3 regulates the trafficking and surface expression of GRM5. Isoform 5 acts as a natural dominant negative, in dynamic competition with constitutively expressed isoform 1, isoform 2 and isoform 3 to regulate synaptic metabotropic glutamate function. Isoform 5, may be involved in the structural changes that occur at synapses during long-lasting neuronal plasticity and development. Forms a high-order complex with SHANK1, which in turn is necessary for the structural and functional integrity of dendritic spines. Negatively regulates T cell activation by inhibiting the calcineurin-NFAT pathway. Acts by competing with calcineurin/PPP3CA for NFAT protein binding, hence preventing NFAT activation by PPP3CA. The polypeptide is Homer protein homolog 1 (Mus musculus (Mouse)).